We begin with the raw amino-acid sequence, 113 residues long: MPKKERKVEGDEVIRVPLPEGNQLFGVVEQALGAGWMDVRCEDGKIRRCRIPGKLRRRVWIRVGDLVIVQPWPVQSDKRGDIVYRYTQTQVDWLLRKGKITQEFLTGGSLLVE.

The S1-like domain maps to 12–87 (EVIRVPLPEG…KRGDIVYRYT (76 aa)).

It belongs to the eIF-1A family.

Functionally, seems to be required for maximal rate of protein biosynthesis. Enhances ribosome dissociation into subunits and stabilizes the binding of the initiator Met-tRNA(I) to 40 S ribosomal subunits. The sequence is that of Translation initiation factor 1A (eIF1A) from Pyrococcus abyssi (strain GE5 / Orsay).